We begin with the raw amino-acid sequence, 152 residues long: Protein SprT-like (152 aa).

Positions 7-148 (QRLVEEVSLQ…GKCKGKLNLI (142 aa)) constitute a SprT-like domain. His-67 serves as a coordination point for Zn(2+). Residue Glu-68 is part of the active site. His-71 serves as a coordination point for Zn(2+).

Belongs to the SprT family. Requires Zn(2+) as cofactor.

It is found in the cytoplasm. This chain is Protein SprT-like, found in Bacillus anthracis (strain A0248).